The primary structure comprises 252 residues: Phosphomannomutase (252 aa).

Aspartate 13 serves as the catalytic Nucleophile. Residues aspartate 13 and aspartate 15 each coordinate Mg(2+). The active-site Proton donor/acceptor is aspartate 15. Residues arginine 22, arginine 124, arginine 135, arginine 142, serine 180, and aspartate 182 each coordinate alpha-D-mannose 1-phosphate. Mg(2+)-binding residues include aspartate 208, tyrosine 220, and threonine 225.

The protein belongs to the eukaryotic PMM family. In terms of assembly, homodimer. Mg(2+) is required as a cofactor. Expressed in roots, leaves, stems and flowers.

It is found in the cytoplasm. It carries out the reaction alpha-D-mannose 1-phosphate = D-mannose 6-phosphate. It functions in the pathway nucleotide-sugar biosynthesis; GDP-alpha-D-mannose biosynthesis; alpha-D-mannose 1-phosphate from D-fructose 6-phosphate: step 2/2. Its function is as follows. Catalyzes the interconversion of mannose-6-phosphate to mannose-1-phosphate, the precursor for the synthesis of GDP-mannose. GDP-mannose is an essential sugar nucleotide for the synthesis of D-mannose-containing cell wall polysaccharides (galactomannans and glucomannans), glycolipids, glycoproteins and the antioxidant L-ascorbate. Involved in the biosynthesis of ascorbate and polysaccharides in response to abiotic stress during seed germination. The sequence is that of Phosphomannomutase from Dendrobium officinale (Orchid).